The primary structure comprises 139 residues: Acyl carrier protein 4, chloroplastic (139 aa).

A chloroplast-targeting transit peptide spans 1 to 55 (MASAAAGASICIKSASCSPLAPGRISSLRSVSLPVSRKSFPSLRSSKGSFARVSC). The 76-residue stretch at 59–134 (PETVAKVCRI…DAADLIEKLM (76 aa)) folds into the Carrier domain. Residue S94 is modified to O-(pantetheine 4'-phosphoryl)serine.

It belongs to the acyl carrier protein (ACP) family. In terms of processing, 4'-phosphopantetheine is transferred from CoA to a specific serine of apo-ACP by acpS. This modification is essential for activity because fatty acids are bound in thioester linkage to the sulfhydryl of the prosthetic group.

It is found in the plastid. It localises to the chloroplast. It participates in lipid metabolism; fatty acid biosynthesis. In terms of biological role, carrier of the growing fatty acid chain in fatty acid biosynthesis. This chain is Acyl carrier protein 4, chloroplastic (ACL1), found in Cuphea lanceolata (Cigar flower).